A 69-amino-acid chain; its full sequence is uncharacterized protein (69 aa).

An HTH cro/C1-type domain is found at 5–60 (IREHRKELGLTQEELAERVGVTRQTIIALEKGRYSPSLILAHRIARALGREHIEDI). A DNA-binding region (H-T-H motif) is located at residues 16 to 35 (QEELAERVGVTRQTIIALEK).

This is an uncharacterized protein from Methanothermobacter thermautotrophicus (strain ATCC 29096 / DSM 1053 / JCM 10044 / NBRC 100330 / Delta H) (Methanobacterium thermoautotrophicum).